The chain runs to 284 residues: 2-dehydro-3-deoxyphosphooctonate aldolase (284 aa).

It belongs to the KdsA family.

Its subcellular location is the cytoplasm. The enzyme catalyses D-arabinose 5-phosphate + phosphoenolpyruvate + H2O = 3-deoxy-alpha-D-manno-2-octulosonate-8-phosphate + phosphate. It functions in the pathway carbohydrate biosynthesis; 3-deoxy-D-manno-octulosonate biosynthesis; 3-deoxy-D-manno-octulosonate from D-ribulose 5-phosphate: step 2/3. Its pathway is bacterial outer membrane biogenesis; lipopolysaccharide biosynthesis. The polypeptide is 2-dehydro-3-deoxyphosphooctonate aldolase (Mannheimia succiniciproducens (strain KCTC 0769BP / MBEL55E)).